A 115-amino-acid polypeptide reads, in one-letter code: NAD(P)H-quinone oxidoreductase subunit M (115 aa).

The protein belongs to the complex I NdhM subunit family. NDH-1 can be composed of about 15 different subunits; different subcomplexes with different compositions have been identified which probably have different functions.

The protein localises to the cellular thylakoid membrane. The enzyme catalyses a plastoquinone + NADH + (n+1) H(+)(in) = a plastoquinol + NAD(+) + n H(+)(out). It carries out the reaction a plastoquinone + NADPH + (n+1) H(+)(in) = a plastoquinol + NADP(+) + n H(+)(out). Functionally, NDH-1 shuttles electrons from an unknown electron donor, via FMN and iron-sulfur (Fe-S) centers, to quinones in the respiratory and/or the photosynthetic chain. The immediate electron acceptor for the enzyme in this species is believed to be plastoquinone. Couples the redox reaction to proton translocation, and thus conserves the redox energy in a proton gradient. Cyanobacterial NDH-1 also plays a role in inorganic carbon-concentration. The polypeptide is NAD(P)H-quinone oxidoreductase subunit M (Prochlorococcus marinus (strain MIT 9211)).